We begin with the raw amino-acid sequence, 760 residues long: MENNNNEPAETVQEKGPKLKNDIDLNDQFKDEKEKKEEISSSSIENKNNNNNNTSTNNVIPNESNNNISNNNVISNENNNTNNNTDNNTDNNNNNNNNNNNNNEPVTSFTVNNKSLIEKEPTLFEFNQEQQIKYKNKSINSLIIKRSGIVIKISQKKSTIIYQDSIIACSELPDNFDTATTTTTTTTTLPIKVTLFTCVLKKKQLTIDKEQRKRKSYTFQFKSNQDSLNFYSNIQSTFLNSLPRGNPKNRKIRILINPKSGKKESHNIFKEVEQLFKDSGIKMKLTVTMEPEHAKKIGFKSNIYKYDTVVFISGDGLLHEFINGLLSREDYEDAKKIPLALIPAGTGNGLANSIGLQDPMSAALAILRGFTKPLDVCIVQQPTVTTIPVVDNNTVTTTTTTTSPTSASPTITSANNNNNNNNNNNNNNNNNNNNNNNNNNSNITKWCSILSLTWGLVSDVDIESEKYRSLGDLRLIIGAAVRILNLRIYRGKVYFLPAIPLDKSQMQSIPKCSFDCNICDSSNSVKVIEDLVCNDNDNNNKNKNEEQNEINSTTSNNNNNNNTTTTSTSSSTSTSTSTSSLTATTTTAKSTNSLSSSPRSDINMSSNSISKSLDIGTIPSCKVTHNSNLLNESSDSLLSKGWKCIEGEFIGVVASTVSHLASDFISSPNAHLSDGLIDLIFINNRSKLSKASLLSILTDSATGDHLKSDLIEHHKVKALILEPSIQKHGIVAIDGERIPYAKTSMENIRGCLNLICRSYH.

The tract at residues 1-108 is disordered; it reads MENNNNEPAE…NNNNNEPVTS (108 aa). Positions 12-39 are enriched in basic and acidic residues; it reads VQEKGPKLKNDIDLNDQFKDEKEKKEEI. Low complexity predominate over residues 40–106; sequence SSSSIENKNN…NNNNNNNEPV (67 aa). Residues 247–383 form the DAGKc domain; it reads PKNRKIRILI…LDVCIVQQPT (137 aa). Residues 257-259 and threonine 288 contribute to the ATP site; that span reads NPK. A substrate-binding site is contributed by 313-316; the sequence is SGDG. Residue aspartate 315 is the Proton donor/acceptor of the active site. ATP is bound by residues glutamate 320 and 345–347; that span reads GTG. The tract at residues 394–438 is disordered; sequence TVTTTTTTTSPTSASPTITSANNNNNNNNNNNNNNNNNNNNNNNN. Residue aspartate 461 coordinates substrate. The ATP site is built by arginine 468 and arginine 474. The segment at 535–605 is disordered; sequence DNDNNNKNKN…SSPRSDINMS (71 aa). Residues 549–597 show a composition bias toward low complexity; the sequence is EINSTTSNNNNNNNTTTTSTSSSTSTSTSTSSLTATTTTAKSTNSLSSS. 734–736 serves as a coordination point for ATP; it reads DGE.

The catalysed reaction is a sphingoid base + ATP = a sphingoid 1-phosphate + ADP + H(+). With respect to regulation, inhibited by N,N,-dimethylsphingosine. Catalyzes the phosphorylation of sphingosine to form sphingosine-1-phosphate (S1P), which probably acts intracellularly as a second messenger perhaps by promoting cell proliferation. The polypeptide is Sphingosine kinase B (sgkB) (Dictyostelium discoideum (Social amoeba)).